The sequence spans 388 residues: MVTVEEVRKAQRAEGPATILAIGTATPANCVDQSTYPDYYFRITNSDHMTDLKQKFQRMCDKSMITKRYMHLTEEILKENPSFCEYMAPSLDARQDIVVVEVPKLGKEAAQSAIKEWGQPKSKITHVIFCTTSGVDMPGADYQLTKLLGLRPSVKRLMMYQQGCFAGGTVLRVAKDLAENNKAARVLVVCSEITVVTFRGPNETHLDSLVGQALFGDGAAAIIVGSDPTPAEKPLFQLVSAAQTLAPDSCGAIDGHLREVGLTFHLLKDVPSIVSNNIEKCLSEAFNPLGISDWNSIFWIAHPGGPAILDQVEDKLGLKPEKLRATRHVLSEYGNMSSACVLFILDEMRKASSNDGLGTTGEGLEWGVLFGFGPGLTIETVVLHSVPA.

Residue Cys-164 is part of the active site.

This sequence belongs to the thiolase-like superfamily. Chalcone/stilbene synthases family.

The enzyme catalyses (E)-4-coumaroyl-CoA + 3 malonyl-CoA + 3 H(+) = 2',4,4',6'-tetrahydroxychalcone + 3 CO2 + 4 CoA. It participates in secondary metabolite biosynthesis; flavonoid biosynthesis. In terms of biological role, the primary product of this enzyme is 4,2',4',6'-tetrahydroxychalcone (also termed naringenin-chalcone or chalcone) which can under specific conditions spontaneously isomerize into naringenin. In Ipomoea nil (Japanese morning glory), this protein is Chalcone synthase D (CHSD).